Reading from the N-terminus, the 361-residue chain is 3-dehydroquinate synthase (361 aa).

Residues G104–D108, T128–T129, K141, K150, and F168–T171 each bind NAD(+). Residues E183, H246, and H263 each contribute to the Zn(2+) site.

Belongs to the sugar phosphate cyclases superfamily. Dehydroquinate synthase family. The cofactor is Co(2+). Zn(2+) serves as cofactor. It depends on NAD(+) as a cofactor.

The protein localises to the cytoplasm. The enzyme catalyses 7-phospho-2-dehydro-3-deoxy-D-arabino-heptonate = 3-dehydroquinate + phosphate. It participates in metabolic intermediate biosynthesis; chorismate biosynthesis; chorismate from D-erythrose 4-phosphate and phosphoenolpyruvate: step 2/7. Functionally, catalyzes the conversion of 3-deoxy-D-arabino-heptulosonate 7-phosphate (DAHP) to dehydroquinate (DHQ). The sequence is that of 3-dehydroquinate synthase from Opitutus terrae (strain DSM 11246 / JCM 15787 / PB90-1).